Consider the following 71-residue polypeptide: Small ribosomal subunit protein bS21 (71 aa).

Residues 43-71 are disordered; it reads TERKRAKASAVKRHAKKLARENARRTRLY. Basic residues predominate over residues 46 to 59; the sequence is KRAKASAVKRHAKK. Residues 60-71 are compositionally biased toward basic and acidic residues; sequence LARENARRTRLY.

It belongs to the bacterial ribosomal protein bS21 family.

This chain is Small ribosomal subunit protein bS21, found in Edwardsiella ictaluri (strain 93-146).